The primary structure comprises 610 residues: Elongation factor 4 (610 aa).

One can recognise a tr-type G domain in the interval 11–193 (EKIRNFSIIA…QIVEKVPAPT (183 aa)). GTP-binding positions include 23-28 (DHGKST) and 140-143 (NKID).

This sequence belongs to the TRAFAC class translation factor GTPase superfamily. Classic translation factor GTPase family. LepA subfamily.

The protein resides in the cell membrane. It carries out the reaction GTP + H2O = GDP + phosphate + H(+). In terms of biological role, required for accurate and efficient protein synthesis under certain stress conditions. May act as a fidelity factor of the translation reaction, by catalyzing a one-codon backward translocation of tRNAs on improperly translocated ribosomes. Back-translocation proceeds from a post-translocation (POST) complex to a pre-translocation (PRE) complex, thus giving elongation factor G a second chance to translocate the tRNAs correctly. Binds to ribosomes in a GTP-dependent manner. The polypeptide is Elongation factor 4 (Streptococcus pyogenes serotype M2 (strain MGAS10270)).